Here is a 99-residue protein sequence, read N- to C-terminus: DNA-binding protein Fis (99 aa).

Residues 75–94 constitute a DNA-binding region (H-T-H motif); it reads QTRAALMLGVNRGTLRKKLK.

It belongs to the transcriptional regulatory Fis family. As to quaternary structure, homodimer.

Activates ribosomal RNA transcription. Plays a direct role in upstream activation of rRNA promoters. The polypeptide is DNA-binding protein Fis (Actinobacillus succinogenes (strain ATCC 55618 / DSM 22257 / CCUG 43843 / 130Z)).